The primary structure comprises 82 residues: Small ribosomal subunit protein bS18 (82 aa).

Positions 1 to 24 are disordered; the sequence is MKRTNMKKARMEQSRRPKKNPLKA.

The protein belongs to the bacterial ribosomal protein bS18 family. Part of the 30S ribosomal subunit. Forms a tight heterodimer with protein bS6.

Its function is as follows. Binds as a heterodimer with protein bS6 to the central domain of the 16S rRNA, where it helps stabilize the platform of the 30S subunit. This Corynebacterium jeikeium (strain K411) protein is Small ribosomal subunit protein bS18.